The chain runs to 552 residues: 5'-AMP-activated protein kinase catalytic subunit alpha-2 (552 aa).

The Protein kinase domain maps to 16-268; sequence YVLGDTLGVG…IKDIREHEWF (253 aa). Residues 22–30 and lysine 45 each bind ATP; that span reads LGVGTFGKV. Aspartate 139 serves as the catalytic Proton acceptor. Phosphothreonine; by LKB1 and CaMKK2 is present on threonine 172. A Phosphothreonine modification is found at threonine 258. Residues 291–376 are AIS; sequence EAVKEVCEKF…PERMPPLIAD (86 aa). Residue serine 377 is modified to Phosphoserine. The disordered stretch occupies residues 477 to 521; that stretch reads VEQRSGSSTPQRSCSAAGLHRPRSSFDSTTAESHSLSGSLTGSLT. The span at 480 to 490 shows a compositional bias: polar residues; that stretch reads RSGSSTPQRSC. At serine 491 the chain carries Phosphoserine. A compositionally biased stretch (polar residues) spans 501-510; that stretch reads SFDSTTAESH. The segment covering 511–521 has biased composition (low complexity); that stretch reads SLSGSLTGSLT.

The protein belongs to the protein kinase superfamily. CAMK Ser/Thr protein kinase family. SNF1 subfamily. In terms of assembly, AMPK is a heterotrimer of an alpha catalytic subunit (PRKAA1 or PRKAA2), a beta (PRKAB1 or PRKAB2) and a gamma non-catalytic subunits (PRKAG1, PRKAG2 or PRKAG3). Interacts with FNIP1 and FNIP2. Associates with internalized insulin receptor/INSR complexes on Golgi/endosomal membranes; PRKAA2/AMPK2 together with ATIC and HACD3/PTPLAD1 is proposed to be part of a signaling network regulating INSR autophosphorylation and endocytosis. Interacts with ARF6. The phosphorylated form at Thr-172 mediated by CamKK2 interacts with ACSS2. Mg(2+) serves as cofactor. In terms of processing, ubiquitinated. Post-translationally, phosphorylated at Thr-172 by STK11/LKB1 in complex with STE20-related adapter-alpha (STRADA) pseudo kinase and CAB39. Also phosphorylated at Thr-172 by CAMKK2; triggered by a rise in intracellular calcium ions, without detectable changes in the AMP/ATP ratio. CAMKK1 can also phosphorylate Thr-172, but at much lower level. Dephosphorylated by protein phosphatase 2A and 2C (PP2A and PP2C). Phosphorylated by ULK1; leading to negatively regulate AMPK activity and suggesting the existence of a regulatory feedback loop between ULK1 and AMPK. Dephosphorylated by PPM1A and PPM1B at Thr-172 (mediated by STK11/LKB1).

Its subcellular location is the cytoplasm. The protein localises to the nucleus. It catalyses the reaction L-seryl-[protein] + ATP = O-phospho-L-seryl-[protein] + ADP + H(+). It carries out the reaction L-threonyl-[protein] + ATP = O-phospho-L-threonyl-[protein] + ADP + H(+). The catalysed reaction is L-seryl-[acetyl-CoA carboxylase] + ATP = O-phospho-L-seryl-[acetyl-CoA carboxylase] + ADP + H(+). The enzyme catalyses L-seryl-[3-hydroxy-3-methylglutaryl-coenzyme A reductase] + ATP = O-phospho-L-seryl-[3-hydroxy-3-methylglutaryl-coenzyme A reductase] + ADP + H(+). Its activity is regulated as follows. Activated by phosphorylation on Thr-172. Binding of AMP to non-catalytic gamma subunit (PRKAG1, PRKAG2 or PRKAG3) results in allosteric activation, inducing phosphorylation on Thr-172. AMP-binding to gamma subunit also sustains activity by preventing dephosphorylation of Thr-172. ADP also stimulates Thr-172 phosphorylation, without stimulating already phosphorylated AMPK. ATP promotes dephosphorylation of Thr-172, rendering the enzyme inactive. Under physiological conditions AMPK mainly exists in its inactive form in complex with ATP, which is much more abundant than AMP. AMPK is activated by antihyperglycemic drug metformin, a drug prescribed to patients with type 2 diabetes: in vivo, metformin seems to mainly inhibit liver gluconeogenesis. However, metformin can be used to activate AMPK in muscle and other cells in culture or ex vivo. Selectively inhibited by compound C (6-[4-(2-Piperidin-1-yl-ethoxy)-phenyl)]-3-pyridin-4-yl-pyyrazolo[1,5-a] pyrimidine. Activated by resveratrol, a natural polyphenol present in red wine, and S17834, a synthetic polyphenol. Salicylate/aspirin directly activates kinase activity, primarily by inhibiting Thr-172 dephosphorylation. In terms of biological role, catalytic subunit of AMP-activated protein kinase (AMPK), an energy sensor protein kinase that plays a key role in regulating cellular energy metabolism. In response to reduction of intracellular ATP levels, AMPK activates energy-producing pathways and inhibits energy-consuming processes: inhibits protein, carbohydrate and lipid biosynthesis, as well as cell growth and proliferation. AMPK acts via direct phosphorylation of metabolic enzymes, and by longer-term effects via phosphorylation of transcription regulators. Regulates lipid synthesis by phosphorylating and inactivating lipid metabolic enzymes such as ACACA, ACACB, GYS1, HMGCR and LIPE; regulates fatty acid and cholesterol synthesis by phosphorylating acetyl-CoA carboxylase (ACACA and ACACB) and hormone-sensitive lipase (LIPE) enzymes, respectively. Promotes lipolysis of lipid droplets by mediating phosphorylation of isoform 1 of CHKA (CHKalpha2). Regulates insulin-signaling and glycolysis by phosphorylating IRS1, PFKFB2 and PFKFB3. Involved in insulin receptor/INSR internalization. AMPK stimulates glucose uptake in muscle by increasing the translocation of the glucose transporter SLC2A4/GLUT4 to the plasma membrane, possibly by mediating phosphorylation of TBC1D4/AS160. Regulates transcription and chromatin structure by phosphorylating transcription regulators involved in energy metabolism such as CRTC2/TORC2, FOXO3, histone H2B, HDAC5, MEF2C, MLXIPL/ChREBP, EP300, HNF4A, p53/TP53, SREBF1, SREBF2 and PPARGC1A. Acts as a key regulator of glucose homeostasis in liver by phosphorylating CRTC2/TORC2, leading to CRTC2/TORC2 sequestration in the cytoplasm. In response to stress, phosphorylates 'Ser-36' of histone H2B (H2BS36ph), leading to promote transcription. Acts as a key regulator of cell growth and proliferation by phosphorylating FNIP1, TSC2, RPTOR, WDR24 and ATG1/ULK1: in response to nutrient limitation, negatively regulates the mTORC1 complex by phosphorylating RPTOR component of the mTORC1 complex and by phosphorylating and activating TSC2. Also phosphorylates and inhibits GATOR2 subunit WDR24 in response to nutrient limitation, leading to suppress glucose-mediated mTORC1 activation. In response to energetic stress, phosphorylates FNIP1, inactivating the non-canonical mTORC1 signaling, thereby promoting nuclear translocation of TFEB and TFE3, and inducing transcription of lysosomal or autophagy genes. In response to nutrient limitation, promotes autophagy by phosphorylating and activating ATG1/ULK1. In that process, it also activates WDR45/WIPI4. Phosphorylates CASP6, thereby preventing its autoprocessing and subsequent activation. AMPK also acts as a regulator of circadian rhythm by mediating phosphorylation of CRY1, leading to destabilize it. May regulate the Wnt signaling pathway by phosphorylating CTNNB1, leading to stabilize it. Also acts as a regulator of cellular polarity by remodeling the actin cytoskeleton; probably by indirectly activating myosin. Also phosphorylates CFTR, EEF2K, KLC1, NOS3 and SLC12A1. Plays an important role in the differential regulation of pro-autophagy (composed of PIK3C3, BECN1, PIK3R4 and UVRAG or ATG14) and non-autophagy (composed of PIK3C3, BECN1 and PIK3R4) complexes, in response to glucose starvation. Can inhibit the non-autophagy complex by phosphorylating PIK3C3 and can activate the pro-autophagy complex by phosphorylating BECN1. Upon glucose starvation, promotes ARF6 activation in a kinase-independent manner leading to cell migration. Upon glucose deprivation mediates the phosphorylation of ACSS2 at 'Ser-659', which exposes the nuclear localization signal of ACSS2, required for its interaction with KPNA1 and nuclear translocation. Upon stress, regulates mitochondrial fragmentation through phosphorylation of MTFR1L. The protein is 5'-AMP-activated protein kinase catalytic subunit alpha-2 of Homo sapiens (Human).